Reading from the N-terminus, the 497-residue chain is Apolipoprotein N-acyltransferase (497 aa).

Helical transmembrane passes span 21 to 41 (FAPF…ALLW), 51 to 71 (ALTG…WLYV), 85 to 105 (VLAL…TGWI), 119 to 139 (GMVA…FTGF), 157 to 177 (FAPV…AAWL), and 189 to 209 (FWLG…IHWT). Residues 221–461 (LQGNIPQNMK…GLHSTAQGFG (241 aa)) enclose the CN hydrolase domain. The Proton acceptor role is filled by Glu-259. Lys-319 is a catalytic residue. Cys-371 serves as the catalytic Nucleophile. Residues 472–492 (SLVFALIGLLLLAGSLAAFSG) traverse the membrane as a helical segment.

Belongs to the CN hydrolase family. Apolipoprotein N-acyltransferase subfamily.

It localises to the cell inner membrane. It carries out the reaction N-terminal S-1,2-diacyl-sn-glyceryl-L-cysteinyl-[lipoprotein] + a glycerophospholipid = N-acyl-S-1,2-diacyl-sn-glyceryl-L-cysteinyl-[lipoprotein] + a 2-acyl-sn-glycero-3-phospholipid + H(+). The protein operates within protein modification; lipoprotein biosynthesis (N-acyl transfer). Its function is as follows. Catalyzes the phospholipid dependent N-acylation of the N-terminal cysteine of apolipoprotein, the last step in lipoprotein maturation. This Nitrosomonas europaea (strain ATCC 19718 / CIP 103999 / KCTC 2705 / NBRC 14298) protein is Apolipoprotein N-acyltransferase.